Reading from the N-terminus, the 419-residue chain is Creatine kinase S-type, mitochondrial (419 aa).

A mitochondrion-targeting transit peptide spans 1–39 (MASTFSKLLTGRNASLLFATLGTSALTTGYLVNRQKVCA). Residues 40-64 (EARDQHKLFPPSADYPDLRKHNNCM) are cardiolipin-binding. Residues 46 to 132 (KLFPPSADYP…FDPVIKLRHN (87 aa)) form the Phosphagen kinase N-terminal domain. One can recognise a Phosphagen kinase C-terminal domain in the interval 159–401 (YVLSSRVRTG…NYLVDCEKKL (243 aa)). ATP is bound by residues 162-166 (SSRVR) and H225. Phosphotyrosine is present on Y255. ATP contacts are provided by residues R270, R326, 354-359 (RGTGGV), and D369. T356 carries the phosphothreonine modification.

This sequence belongs to the ATP:guanido phosphotransferase family. As to quaternary structure, exists as an octamer composed of four CKMT2 homodimers.

The protein resides in the mitochondrion inner membrane. It carries out the reaction creatine + ATP = N-phosphocreatine + ADP + H(+). Its function is as follows. Reversibly catalyzes the transfer of phosphate between ATP and various phosphogens (e.g. creatine phosphate). Creatine kinase isoenzymes play a central role in energy transduction in tissues with large, fluctuating energy demands, such as skeletal muscle, heart, brain and spermatozoa. The chain is Creatine kinase S-type, mitochondrial (CKMT2) from Oryctolagus cuniculus (Rabbit).